The sequence spans 200 residues: MALKYPSGKEYRGNKPNAARRPAADYANRGMTLEDDLNATNEYYRERGIAVIHKKPTPVQIVRVDYPKRSAAVITEAYFRQASTTDYNGVYRGKYIDFEAKETKNKTAFPLKNFHAHQIRHMEQVVAHGGICFAILRFSLLNETYLLDASHLIAWWNKQEAGGRKSIPKQEIERHGHSIPLGYQPRIDYISVVDNVYFTR.

The interval 1–27 (MALKYPSGKEYRGNKPNAARRPAADYA) is disordered. Mg(2+) contacts are provided by threonine 84, aspartate 86, glutamate 99, and glutamine 118.

The protein belongs to the RecU family. Homodimer. Mg(2+) is required as a cofactor.

The protein localises to the cytoplasm. The enzyme catalyses Endonucleolytic cleavage at a junction such as a reciprocal single-stranded crossover between two homologous DNA duplexes (Holliday junction).. Functionally, endonuclease that resolves Holliday junction intermediates in genetic recombination. Cleaves mobile four-strand junctions by introducing symmetrical nicks in paired strands. Promotes annealing of linear ssDNA with homologous dsDNA. Required for DNA repair, homologous recombination and chromosome segregation. This is Holliday junction resolvase RecU from Geobacillus kaustophilus (strain HTA426).